We begin with the raw amino-acid sequence, 85 residues long: Small ribosomal subunit protein bS18A (85 aa).

This sequence belongs to the bacterial ribosomal protein bS18 family. In terms of assembly, part of the 30S ribosomal subunit. Forms a tight heterodimer with protein bS6.

Functionally, binds as a heterodimer with protein bS6 to the central domain of the 16S rRNA, where it helps stabilize the platform of the 30S subunit. This Mycolicibacterium smegmatis (strain ATCC 700084 / mc(2)155) (Mycobacterium smegmatis) protein is Small ribosomal subunit protein bS18A.